The following is a 92-amino-acid chain: DNA-directed RNA polymerase subunit omega (92 aa).

The protein belongs to the RNA polymerase subunit omega family. The RNAP catalytic core consists of 2 alpha, 1 beta, 1 beta' and 1 omega subunit. When a sigma factor is associated with the core the holoenzyme is formed, which can initiate transcription.

The enzyme catalyses RNA(n) + a ribonucleoside 5'-triphosphate = RNA(n+1) + diphosphate. In terms of biological role, promotes RNA polymerase assembly. Latches the N- and C-terminal regions of the beta' subunit thereby facilitating its interaction with the beta and alpha subunits. This is DNA-directed RNA polymerase subunit omega from Shewanella baltica (strain OS223).